We begin with the raw amino-acid sequence, 563 residues long: MDTKTLIASEIAKVVPELEQDAIFNLLETPKNSDMGDLAFPAFSLAKVLRKAPQMIASELAEQIDESQFEKVVAVGPYINFFLDKTKISSQVLEQVITAGSDYAQQDEGQGRNVAIDMSSPNIAKPFSIGHLRSTVIGDSLAHIFAKMGYKPVKINHLGDWGKQFGMLIVAYKKWGDEAAVQAHPIDELLKLYVRINAEAETDPTVDEEAREWFRKLEDGDKEATELWQWFRDESLLEFNRLYDQLHVTFDSYNGEAFYNDKMDEVLDLLEAKNLLVESKGAQVVNLEKYGIEHPALIKKSDGATLYITRDLAAALYRKRTYDFAKSVYVVGNEQAAHFKQLKAVLKEMGYDWSDDMTHVAFGLVTKGGAKLSTRKGNVILLEPTVAEAINRAASQIEAKNPNLADKEAVAHSVGVGAIKFYDLKTDRMNGYDFDLEAMVSFEGETGPYVQYAHARIQSILRKADFTPSATTTYSLADAESWEIIKLIQDFPRIIKRTSDNFEPSIMAKFAINLAQSFNKYYAHTRILDDNSERDNRLALCYATATVLKEALRLLGVDAPNEM.

The short motif at Pro-121–His-131 is the 'HIGH' region element.

Belongs to the class-I aminoacyl-tRNA synthetase family. As to quaternary structure, monomer.

It localises to the cytoplasm. It catalyses the reaction tRNA(Arg) + L-arginine + ATP = L-arginyl-tRNA(Arg) + AMP + diphosphate. The sequence is that of Arginine--tRNA ligase from Streptococcus pyogenes serotype M2 (strain MGAS10270).